Here is a 111-residue protein sequence, read N- to C-terminus: Large ribosomal subunit protein uL22 (111 aa).

Belongs to the universal ribosomal protein uL22 family. As to quaternary structure, part of the 50S ribosomal subunit.

In terms of biological role, this protein binds specifically to 23S rRNA; its binding is stimulated by other ribosomal proteins, e.g. L4, L17, and L20. It is important during the early stages of 50S assembly. It makes multiple contacts with different domains of the 23S rRNA in the assembled 50S subunit and ribosome. Its function is as follows. The globular domain of the protein is located near the polypeptide exit tunnel on the outside of the subunit, while an extended beta-hairpin is found that lines the wall of the exit tunnel in the center of the 70S ribosome. The chain is Large ribosomal subunit protein uL22 from Xylella fastidiosa (strain M23).